The primary structure comprises 214 residues: Phosphopantothenoylcysteine decarboxylase HAL3 (214 aa).

FMN contacts are provided by residues 30–32 (GSV) and 55–57 (TRA). His-92 serves as the catalytic Proton donor. Residues 108-111 (SANT) and Ala-142 contribute to the FMN site. Positions 144, 174, and 176 each coordinate N-[(R)-4-phosphopantothenoyl]-L-cysteine. Cys-177 (proton donor) is an active-site residue. Met-185 is a binding site for N-[(R)-4-phosphopantothenoyl]-L-cysteine.

This sequence belongs to the HFCD (homooligomeric flavin containing Cys decarboxylase) superfamily. In terms of assembly, homotrimer. The cofactor is FMN. In terms of tissue distribution, mainly expressed in stems, to a lower extent in flowers, leaves and fruits, and at basal levels in roots.

It localises to the cell membrane. The protein localises to the cytoplasm. The enzyme catalyses N-[(R)-4-phosphopantothenoyl]-L-cysteine + H(+) = (R)-4'-phosphopantetheine + CO2. It functions in the pathway cofactor biosynthesis; coenzyme A biosynthesis; CoA from (R)-pantothenate: step 3/5. Its function is as follows. Involved in plant growth, and promotes salt and osmotic tolerance, probably via coenzyme A (CoA) accumulation and endogenous proline accumulation. Catalyzes the decarboxylation of 4'-phosphopantothenoylcysteine to 4'-phosphopantetheine, a key step in coenzyme A biosynthesis. Required for roots development. In Malus domestica (Apple), this protein is Phosphopantothenoylcysteine decarboxylase HAL3.